Here is a 968-residue protein sequence, read N- to C-terminus: Isoleucine--tRNA ligase (968 aa).

A 'HIGH' region motif is present at residues Pro68 to His78. Glu582 serves as a coordination point for L-isoleucyl-5'-AMP. A 'KMSKS' region motif is present at residues Lys623–Ser627. Residue Lys626 participates in ATP binding. Zn(2+) is bound by residues Cys936, Cys939, Cys956, and Cys959.

This sequence belongs to the class-I aminoacyl-tRNA synthetase family. IleS type 1 subfamily. As to quaternary structure, monomer. The cofactor is Zn(2+).

The protein localises to the cytoplasm. It catalyses the reaction tRNA(Ile) + L-isoleucine + ATP = L-isoleucyl-tRNA(Ile) + AMP + diphosphate. Functionally, catalyzes the attachment of isoleucine to tRNA(Ile). As IleRS can inadvertently accommodate and process structurally similar amino acids such as valine, to avoid such errors it has two additional distinct tRNA(Ile)-dependent editing activities. One activity is designated as 'pretransfer' editing and involves the hydrolysis of activated Val-AMP. The other activity is designated 'posttransfer' editing and involves deacylation of mischarged Val-tRNA(Ile). This Prochlorococcus marinus (strain MIT 9301) protein is Isoleucine--tRNA ligase.